Consider the following 275-residue polypeptide: MGSCYSRKNKVSTISLDEEEKKKEKKKKKKIYILNGASGSGKDTQCRLLEKKYNYKIICISKLLKEYKEEYNKENVLNEEENYFDEIEKCMIDGSLVNDQIVIEIFHKQLNKYINDDKYNGIIINGFPRNYEQALLIIQNNISITKFINIQVGKDTLWTRINNRIIDPITNISYNENIIQIIKKKREGQELSDKEQKQLIIDNHLYNNLSNDILERLTKRKDDEEQVFNKRFQLYIESEQKINSLFKNICKNVDGEKSINDIFDQICSIIDDNPN.

The N-myristoyl glycine moiety is linked to residue Gly2. Residues 21 to 30 (KKKEKKKKKK) are required for cell membrane translocation but dispensable for cell membrane localization. An ATP-binding site is contributed by 39 to 44 (GSGKDT). The tract at residues 59–97 (CISKLLKEYKEEYNKENVLNEEENYFDEIEKCMIDGSLV) is NMP. Residues 95 to 97 (SLV), 126 to 129 (GFPR), and Gln133 each bind AMP. Residue Arg164 participates in ATP binding. An LID region spans residues 165–214 (IIDPITNISYNENIIQIIKKKREGQELSDKEQKQLIIDNHLYNNLSNDIL). Residues Arg220 and Arg231 each coordinate AMP.

The protein belongs to the adenylate kinase family. In terms of assembly, monomer. Oligomer. Heterodimer composed of NMT and AK2; AK2 myristoylation stabilizes the complex. Post-translationally, myristoylation is required for cell membrane localization. May be palmitoylated at Cys-4 which stabilizes cell membrane localization of the myristoylated protein.

The protein localises to the parasitophorous vacuole membrane. The enzyme catalyses AMP + ATP = 2 ADP. In terms of biological role, catalyzes the reversible transfer of the terminal phosphate group between ATP and AMP. Has very low activity with CTP, GTP, ITP and UTP and no activity with GMP, UMP or IMP in vitro. The polypeptide is Adenylate kinase 2 (Plasmodium falciparum (isolate 3D7)).